We begin with the raw amino-acid sequence, 166 residues long: MFPMVTEFMNYGQQTVRAARYIGQGFMITLSHANRLPVTIQYPYEKLITSERFRGRIHFEFDKCIACEVCVRVCPIDLPVVDWKLETDIRKKRLLNYSIDFGICIFCGNCVEYCPTNCLSMTEEYELSTYDRHELNYNQIALGRLPMSVIDDYTIRTILNLPEIKT.

4Fe-4S ferredoxin-type domains are found at residues 55–84 and 95–124; these read GRIH…VDWK and LNYS…MTEE. C64, C67, C70, C74, C104, C107, C110, and C114 together coordinate [4Fe-4S] cluster.

This sequence belongs to the complex I 23 kDa subunit family. NDH is composed of at least 16 different subunits, 5 of which are encoded in the nucleus. [4Fe-4S] cluster is required as a cofactor.

It is found in the plastid. The protein localises to the chloroplast thylakoid membrane. It catalyses the reaction a plastoquinone + NADH + (n+1) H(+)(in) = a plastoquinol + NAD(+) + n H(+)(out). The catalysed reaction is a plastoquinone + NADPH + (n+1) H(+)(in) = a plastoquinol + NADP(+) + n H(+)(out). In terms of biological role, NDH shuttles electrons from NAD(P)H:plastoquinone, via FMN and iron-sulfur (Fe-S) centers, to quinones in the photosynthetic chain and possibly in a chloroplast respiratory chain. The immediate electron acceptor for the enzyme in this species is believed to be plastoquinone. Couples the redox reaction to proton translocation, and thus conserves the redox energy in a proton gradient. The protein is NAD(P)H-quinone oxidoreductase subunit I, chloroplastic of Pentanema britannica (British yellowhead).